The sequence spans 185 residues: MSKEVLSKSKEKMEKAEQALTRQLGTIRAGRANASLLDRLSVDYYGAATPVNQMASISVPEARMLLITPYDKTILGEIEKAILKSDLGLTPNNDGSVLRLSIPQLTEERRKELVKEVKKEAEEAKVAVRNIRREANEELKKLEKSGDITEDDLRSYGEDVQKLTDESIKNIDSITKDKEAEILEV.

This sequence belongs to the RRF family.

Its subcellular location is the cytoplasm. Responsible for the release of ribosomes from messenger RNA at the termination of protein biosynthesis. May increase the efficiency of translation by recycling ribosomes from one round of translation to another. This chain is Ribosome-recycling factor, found in Listeria monocytogenes serotype 4a (strain HCC23).